Here is a 695-residue protein sequence, read N- to C-terminus: Elongation factor G (695 aa).

A tr-type G domain is found at 10 to 289; sequence KNLRNIGIMA…AVVAWMPSPL (280 aa). GTP-binding positions include 19–26, 83–87, and 137–140; these read AHIDAGKT, DTPGH, and NKMD.

It belongs to the TRAFAC class translation factor GTPase superfamily. Classic translation factor GTPase family. EF-G/EF-2 subfamily.

It is found in the cytoplasm. Functionally, catalyzes the GTP-dependent ribosomal translocation step during translation elongation. During this step, the ribosome changes from the pre-translocational (PRE) to the post-translocational (POST) state as the newly formed A-site-bound peptidyl-tRNA and P-site-bound deacylated tRNA move to the P and E sites, respectively. Catalyzes the coordinated movement of the two tRNA molecules, the mRNA and conformational changes in the ribosome. The protein is Elongation factor G of Protochlamydia amoebophila (strain UWE25).